The primary structure comprises 144 residues: Large ribosomal subunit protein uL15 (144 aa).

Residues 1–49 form a disordered region; it reads MRLNTLSPAAGAKSAAKRVGRGIGSGTGKTCGRGHKGQKSRSGGGVRVG. The span at 21 to 31 shows a compositional bias: gly residues; sequence RGIGSGTGKTC.

This sequence belongs to the universal ribosomal protein uL15 family. Part of the 50S ribosomal subunit.

Functionally, binds to the 23S rRNA. In Shewanella sediminis (strain HAW-EB3), this protein is Large ribosomal subunit protein uL15.